We begin with the raw amino-acid sequence, 171 residues long: 3-hydroxydecanoyl-[acyl-carrier-protein] dehydratase (171 aa).

The active site involves H70.

Belongs to the thioester dehydratase family. FabA subfamily. Homodimer.

Its subcellular location is the cytoplasm. It catalyses the reaction a (3R)-hydroxyacyl-[ACP] = a (2E)-enoyl-[ACP] + H2O. It carries out the reaction (3R)-hydroxydecanoyl-[ACP] = (2E)-decenoyl-[ACP] + H2O. The enzyme catalyses (2E)-decenoyl-[ACP] = (3Z)-decenoyl-[ACP]. It participates in lipid metabolism; fatty acid biosynthesis. Functionally, necessary for the introduction of cis unsaturation into fatty acids. Catalyzes the dehydration of (3R)-3-hydroxydecanoyl-ACP to E-(2)-decenoyl-ACP and then its isomerization to Z-(3)-decenoyl-ACP. Can catalyze the dehydratase reaction for beta-hydroxyacyl-ACPs with saturated chain lengths up to 16:0, being most active on intermediate chain length. The protein is 3-hydroxydecanoyl-[acyl-carrier-protein] dehydratase of Histophilus somni (strain 129Pt) (Haemophilus somnus).